The chain runs to 238 residues: tRNA1(Val) (adenine(37)-N6)-methyltransferase (238 aa).

It belongs to the methyltransferase superfamily. tRNA (adenine-N(6)-)-methyltransferase family.

It is found in the cytoplasm. It catalyses the reaction adenosine(37) in tRNA1(Val) + S-adenosyl-L-methionine = N(6)-methyladenosine(37) in tRNA1(Val) + S-adenosyl-L-homocysteine + H(+). Specifically methylates the adenine in position 37 of tRNA(1)(Val) (anticodon cmo5UAC). This is tRNA1(Val) (adenine(37)-N6)-methyltransferase from Shewanella sp. (strain W3-18-1).